The primary structure comprises 238 residues: Ribonuclease PH (238 aa).

Phosphate-binding positions include Arg-86 and 124–126 (GTR).

It belongs to the RNase PH family. Homohexameric ring arranged as a trimer of dimers.

It carries out the reaction tRNA(n+1) + phosphate = tRNA(n) + a ribonucleoside 5'-diphosphate. Phosphorolytic 3'-5' exoribonuclease that plays an important role in tRNA 3'-end maturation. Removes nucleotide residues following the 3'-CCA terminus of tRNAs; can also add nucleotides to the ends of RNA molecules by using nucleoside diphosphates as substrates, but this may not be physiologically important. Probably plays a role in initiation of 16S rRNA degradation (leading to ribosome degradation) during starvation. The chain is Ribonuclease PH from Vibrio vulnificus (strain CMCP6).